We begin with the raw amino-acid sequence, 550 residues long: Arginine--tRNA ligase (550 aa).

The 'HIGH' region motif lies at 130-140 (ANPTGPIHIGG).

Belongs to the class-I aminoacyl-tRNA synthetase family. Monomer.

The protein resides in the cytoplasm. It catalyses the reaction tRNA(Arg) + L-arginine + ATP = L-arginyl-tRNA(Arg) + AMP + diphosphate. In Mycobacterium leprae (strain TN), this protein is Arginine--tRNA ligase (argS).